A 365-amino-acid polypeptide reads, in one-letter code: Peptide chain release factor 2 (365 aa).

At Gln251 the chain carries N5-methylglutamine.

Belongs to the prokaryotic/mitochondrial release factor family. In terms of processing, methylated by PrmC. Methylation increases the termination efficiency of RF2.

The protein localises to the cytoplasm. Its function is as follows. Peptide chain release factor 2 directs the termination of translation in response to the peptide chain termination codons UGA and UAA. This is Peptide chain release factor 2 from Neorickettsia sennetsu (strain ATCC VR-367 / Miyayama) (Ehrlichia sennetsu).